A 340-amino-acid chain; its full sequence is ATPase BagA (340 aa).

Positions 31, 33, 34, 35, 36, 240, 316, and 318 each coordinate ATP.

The protein belongs to the arsA ATPase family. BagA/BagB subfamily. Forms a heterodimer composed of BagA and BagB. Interacts with Rv1509. Also interacts with a large number of proteins, including proteins required for mycolic acid biosynthesis.

With respect to regulation, the ATPase activity of the BagAB complex is not stimulated by antimonite, an arsenite substitute, suggesting that BagAB is not a transporter for this family of elements. In terms of biological role, component of the heterodimeric BagAB ATPase complex, whose two subunits are actively involved in ATP hydrolysis. The ATPase activity is required to mediate resistance against nitric oxide (NO) and elevated levels of glycerol. The polypeptide is ATPase BagA (Mycobacterium tuberculosis (strain ATCC 25618 / H37Rv)).